Consider the following 323-residue polypeptide: Ribonuclease Z (323 aa).

Zn(2+) is bound by residues His62, His64, Asp66, His67, His140, Asp211, and His270. Asp66 serves as the catalytic Proton acceptor.

This sequence belongs to the RNase Z family. Homodimer. Zn(2+) is required as a cofactor.

It catalyses the reaction Endonucleolytic cleavage of RNA, removing extra 3' nucleotides from tRNA precursor, generating 3' termini of tRNAs. A 3'-hydroxy group is left at the tRNA terminus and a 5'-phosphoryl group is left at the trailer molecule.. Its function is as follows. Zinc phosphodiesterase, which displays some tRNA 3'-processing endonuclease activity. Probably involved in tRNA maturation, by removing a 3'-trailer from precursor tRNA. The chain is Ribonuclease Z from Marinobacter nauticus (strain ATCC 700491 / DSM 11845 / VT8) (Marinobacter aquaeolei).